The chain runs to 137 residues: MARTILAFDFGTYSIGCAVGQDITGTAQGLPSFKAQDGIPNWDQIEKVIKEWQPERLVVGLPLNMDGTEQPLTQRAKKFANRLNGRFNLPVELQDERLTTVSAKAEIFERGGYKALKKDKVDSISACLILESWFEAQ.

Belongs to the YqgF nuclease family.

Its subcellular location is the cytoplasm. Its function is as follows. Could be a nuclease involved in processing of the 5'-end of pre-16S rRNA. This is Putative pre-16S rRNA nuclease from Actinobacillus pleuropneumoniae serotype 7 (strain AP76).